A 164-amino-acid chain; its full sequence is uncharacterized protein (164 aa).

This is an uncharacterized protein from Escherichia coli (strain K12).